Reading from the N-terminus, the 1045-residue chain is MGSQPPLGSPLSREEGEAPPPAPASEGRRRSRRVRLRGSCRHRPSFLGCRELAASAPARPAPASSEIMASAAKEFKMDNFSPKAGTSKLQQTVPADASPDSKCPICLDRFDNVSYLDRCLHKFCFRCVQEWSKNKAECPLCKQPFDSIFHSVRAEDDFKEYVLRPSYNGSFVTPDRRFRYRTTLTRERNASVYSPSGPVNRRTTTPPDSGVLFEGLGISTRPRDVEIPQFMRQIAVRRPTTADERSLRKIQEQDIINFRRTLYRAGARVRNIEDGGRYRDISAEFFRRNPACLHRLVPWLKRELTVLFGAHGSLVNIVQHIIMSNVTRYDLESQAFVSDLRPFLLNRTEHFIHEFISFARSPFNMAAFDQHANYDCPAPSYEEGSHSDSSVITISPDEAETQELDINVATVSQAPWDDETPGPSYSSSEQVHVTMSSLLNTSDSSDEELVTGGATSQIQGVQTNDDLNNDSDDSSDNCVIVGFVKPLAERTPELVELSSDSEDLGSYEKMETVKTQEQEQSYSSGDSDVSRCSSPHSVLGKDEQINKGHCDSSTRIKSKKEEKRSTSLSSPRNLNSSVRGDRVYSPYNHRHRKRGRSRSSDSRSQSRSGHDQKNHRKHHGKKRMKSKRSRSRESSRPRGRRDKKRSRTRDSSWSRRSQTLSLSSESTSRSRSRSSDHGKRRSRSRNRDRYYLRNNYGSRYKWEYTYYSRNKDRDGYESSYRRRTLSRAHYSRQSSSPEFRVQSFSERTNARKKNNHSERKYYYYERHRSRSLSSNRSRTASTGTDRVRNEKPGGKRKYKTRHLEGTNEVAQPSREFASKAKDSHYQKSSSKLDGNYKNESDTFSDSRSSDRETKHKRRKRKTRSLSVEIVYEGKATDTTKHHKKKKKKHKKKHKKHHGDNASRSPVVITIDSDSDKDSEVKEDTECDNSGPQDPLQNEFLAPSLEPFETKDVVTIEAEFGVLDKECDIATLSNNLNNANKTVDNIPPLAASVEQTLDVREESTFVSDLENQPSNIVSLQTEPSRQLPSPRTSLMSVCLGRDCDMS.

The disordered stretch occupies residues 1–35 (MGSQPPLGSPLSREEGEAPPPAPASEGRRRSRRVR). The tract at residues 1–195 (MGSQPPLGSP…RERNASVYSP (195 aa)) is E3 ubiquitin-protein ligase activity. Positions 51–374 (ELAASAPARP…MAAFDQHANY (324 aa)) are required for DNA-binding. Residues Lys73, Lys76, Lys83, and Lys88 each participate in a glycyl lysine isopeptide (Lys-Gly) (interchain with G-Cter in SUMO2) cross-link. A Phosphoserine modification is found at Ser98. The RING-type zinc-finger motif lies at 103–142 (CPICLDRFDNVSYLDRCLHKFCFRCVQEWSKNKAECPLCK). A Glycyl lysine isopeptide (Lys-Gly) (interchain with G-Cter in SUMO2) cross-link involves residue Lys159. Ser194 carries the post-translational modification Phosphoserine. Lys249 participates in a covalent cross-link: Glycyl lysine isopeptide (Lys-Gly) (interchain with G-Cter in SUMO2). The required for sumoylation and localization to discrete nuclear foci stretch occupies residues 437 to 574 (SLLNTSDSSD…STSLSSPRNL (138 aa)). Residues 437-654 (SLLNTSDSSD…RSRTRDSSWS (218 aa)) form an interaction with SUMO1 region. A disordered region spans residues 442 to 475 (SDSSDEELVTGGATSQIQGVQTNDDLNNDSDDSS). Residues 453–463 (GATSQIQGVQT) are compositionally biased toward polar residues. Residues 456-731 (SQIQGVQTND…RRTLSRAHYS (276 aa)) are interaction with p53/TP53. The interaction with TOP1 stretch occupies residues 456–882 (SQIQGVQTND…GKATDTTKHH (427 aa)). Ser499 is modified (phosphoserine). The interval 511 to 692 (ETVKTQEQEQ…RSRNRDRYYL (182 aa)) is disordered. Residues 521–534 (SYSSGDSDVSRCSS) are compositionally biased toward low complexity. Over residues 539–565 (LGKDEQINKGHCDSSTRIKSKKEEKRS) the composition is skewed to basic and acidic residues. Lys560 participates in a covalent cross-link: Glycyl lysine isopeptide (Lys-Gly) (interchain with G-Cter in SUMO). Residues 566 to 578 (TSLSSPRNLNSSV) show a composition bias toward polar residues. Position 585 is a phosphoserine (Ser585). Composition is skewed to basic residues over residues 588-597 (NHRHRKRGRS), 613-630 (KNHR…KRSR), and 637-647 (PRGRRDKKRSR). The span at 654-669 (SRRSQTLSLSSESTSR) shows a compositional bias: low complexity. Lys701 is covalently cross-linked (Glycyl lysine isopeptide (Lys-Gly) (interchain with G-Cter in SUMO2)). Residues 713–936 (RDGYESSYRR…DNSGPQDPLQ (224 aa)) are disordered. Phosphoserine; by PLK1 is present on Ser718. Residues 721–730 (RRRTLSRAHY) show a composition bias toward basic residues. Positions 731–747 (SRQSSSPEFRVQSFSER) are enriched in polar residues. At Ser734 the chain carries Phosphoserine. 2 stretches are compositionally biased toward basic and acidic residues: residues 755–766 (NHSERKYYYYER) and 816–825 (FASKAKDSHY). Glycyl lysine isopeptide (Lys-Gly) (interchain with G-Cter in SUMO2) cross-links involve residues Lys819 and Lys837. The span at 854-863 (KHKRRKRKTR) shows a compositional bias: basic residues. The interval 854–917 (KHKRRKRKTR…ITIDSDSDKD (64 aa)) is interaction with UBE2I. A phosphoserine mark is found at Ser864 and Ser866. Residues 880–897 (KHHKKKKKKHKKKHKKHH) are compositionally biased toward basic residues. Residues Ser912, Ser914, and Ser1028 each carry the phosphoserine modification. Residues 913–923 (DSDKDSEVKED) are compositionally biased toward basic and acidic residues.

Interacts with PARK7/DJ-1. Interacts with TOP1. Interacts with p53/TP53; can both ubiquitinate and sumoylate p53/TP53. Interacts with the SUMO1 conjugating enzyme UBE2I. Interacts with SUMO1. Interacts with NKX3-1; polyubiquitinates NKX3-1 and induces its proteasomal degradation. Interacts with SIN3A; sumoylates SIN3A. Interacts with IKBKE; induced by DNA damage. Post-translationally, phosphorylation at Ser-98 regulates the E3 ubiquitin-protein ligase activity but not the SUMO1-protein ligase activity. Phosphorylation at Ser-718 increases the E3 ubiquitin-protein ligase activity versus the SUMO1-protein ligase activity resulting in increased p53/TP53 ubiquitination and degradation. In terms of processing, sumoylated. In terms of tissue distribution, expressed at highest levels in testis and at lower levels in adrenal gland, bone marrow, brain, colon, heart, kidney, liver, muscle, ovary, pancreas, placenta, prostate, skeletal muscle, skin, small intestine, spleen, stomach, testis, thymus, thyroid and uterus. Expressed in the alveolar epithelium of the lung. Expression is commonly decreased in colon adenocarcinomas and lung cancers.

The protein localises to the nucleus. It localises to the PML body. The enzyme catalyses S-ubiquitinyl-[E2 ubiquitin-conjugating enzyme]-L-cysteine + [acceptor protein]-L-lysine = [E2 ubiquitin-conjugating enzyme]-L-cysteine + N(6)-ubiquitinyl-[acceptor protein]-L-lysine.. Its function is as follows. Functions as an E3 ubiquitin-protein ligase and as an E3 SUMO1-protein ligase. Probable tumor suppressor involved in cell growth, cell proliferation and apoptosis that regulates p53/TP53 stability through ubiquitin-dependent degradation. May regulate chromatin modification through sumoylation of several chromatin modification-associated proteins. May be involved in DNA damage-induced cell death through IKBKE sumoylation. The sequence is that of E3 ubiquitin-protein ligase Topors (TOPORS) from Homo sapiens (Human).